We begin with the raw amino-acid sequence, 654 residues long: Macrolide export ATP-binding/permease protein MacB (654 aa).

Residues 6–244 form the ABC transporter domain; that stretch reads LKVEDLTRRF…EQAAKTPSAS (239 aa). Residue 42–49 participates in ATP binding; that stretch reads GASGSGKS. The next 4 membrane-spanning stretches (helical) occupy residues 280–300, 529–549, 584–604, and 619–639; these read FLTM…VALG, LLIS…VMNI, LVCL…GFAF, and SIIW…FLPA.

This sequence belongs to the ABC transporter superfamily. Macrolide exporter (TC 3.A.1.122) family. In terms of assembly, homodimer. Part of the tripartite efflux system MacAB-TolC, which is composed of an inner membrane transporter, MacB, a periplasmic membrane fusion protein, MacA, and an outer membrane component, TolC. The complex forms a large protein conduit and can translocate molecules across both the inner and outer membranes. Interacts with MacA.

Its subcellular location is the cell inner membrane. Its function is as follows. Part of the tripartite efflux system MacAB-TolC. MacB is a non-canonical ABC transporter that contains transmembrane domains (TMD), which form a pore in the inner membrane, and an ATP-binding domain (NBD), which is responsible for energy generation. Confers resistance against macrolides. The protein is Macrolide export ATP-binding/permease protein MacB of Vibrio parahaemolyticus serotype O3:K6 (strain RIMD 2210633).